Consider the following 291-residue polypeptide: 3-methylcatechol 2,3-dioxygenase (291 aa).

VOC domains are found at residues 5 to 119 and 143 to 264; these read RLGY…IYYG and GLGH…YGWG. Fe cation is bound by residues His146, His210, and Glu260.

It belongs to the extradiol ring-cleavage dioxygenase family. In terms of assembly, homooctamer. Requires Fe(2+) as cofactor.

The catalysed reaction is 3-methylcatechol + O2 = 2-hydroxy-6-oxo-2,4-heptadienoate + H(+). The protein operates within xenobiotic degradation; toluene degradation. The protein is 3-methylcatechol 2,3-dioxygenase (todE) of Pseudomonas putida (strain ATCC 700007 / DSM 6899 / JCM 31910 / BCRC 17059 / LMG 24140 / F1).